The sequence spans 117 residues: Large ribosomal subunit protein bL20 (117 aa).

Belongs to the bacterial ribosomal protein bL20 family.

Its function is as follows. Binds directly to 23S ribosomal RNA and is necessary for the in vitro assembly process of the 50S ribosomal subunit. It is not involved in the protein synthesizing functions of that subunit. This chain is Large ribosomal subunit protein bL20, found in Rickettsia massiliae (strain Mtu5).